We begin with the raw amino-acid sequence, 335 residues long: Putative type I specificity subunit S.MpnORF89P (335 aa).

The protein belongs to the type-I restriction system S methylase family. The methyltransferase is composed of M and S polypeptides.

The specificity (S) subunit of a type I methyltransferase (MTase); this subunit dictates DNA sequence specificity. The single R subunit has multiple frameshifts and is probably not expressed. The protein is Putative type I specificity subunit S.MpnORF89P of Mycoplasma pneumoniae (strain ATCC 29342 / M129 / Subtype 1) (Mycoplasmoides pneumoniae).